Reading from the N-terminus, the 412-residue chain is Multifunctional CCA protein (412 aa).

Residues Gly-8 and Arg-11 each contribute to the ATP site. Residues Gly-8 and Arg-11 each contribute to the CTP site. Mg(2+) is bound by residues Asp-21 and Asp-23. Residues Arg-91, Arg-137, and Arg-140 each coordinate ATP. Residues Arg-91, Arg-137, and Arg-140 each coordinate CTP. In terms of domain architecture, HD spans 228-329; the sequence is TGIHTLMTLS…VKLFDSIDAW (102 aa).

It belongs to the tRNA nucleotidyltransferase/poly(A) polymerase family. Bacterial CCA-adding enzyme type 1 subfamily. As to quaternary structure, monomer. Can also form homodimers and oligomers. The cofactor is Mg(2+). It depends on Ni(2+) as a cofactor.

It catalyses the reaction a tRNA precursor + 2 CTP + ATP = a tRNA with a 3' CCA end + 3 diphosphate. It carries out the reaction a tRNA with a 3' CCA end + 2 CTP + ATP = a tRNA with a 3' CCACCA end + 3 diphosphate. Its function is as follows. Catalyzes the addition and repair of the essential 3'-terminal CCA sequence in tRNAs without using a nucleic acid template. Adds these three nucleotides in the order of C, C, and A to the tRNA nucleotide-73, using CTP and ATP as substrates and producing inorganic pyrophosphate. tRNA 3'-terminal CCA addition is required both for tRNA processing and repair. Also involved in tRNA surveillance by mediating tandem CCA addition to generate a CCACCA at the 3' terminus of unstable tRNAs. While stable tRNAs receive only 3'-terminal CCA, unstable tRNAs are marked with CCACCA and rapidly degraded. The protein is Multifunctional CCA protein of Escherichia coli O1:K1 / APEC.